A 1274-amino-acid polypeptide reads, in one-letter code: MAQTNGELEHSKGMSSPAVRISQAQKSTKLTVDPESPEQVANGTHAEGEQPEENAGGLFQISVKLPHEPYKIQVMVSSQEQVQDVRQSIVELPSTFQYTCFHLEFNGKRINDFVELSEVPDLKADSEIVLVEDPYTEKEARMHVVRMRELVGAAGDRVDNIQGVNAGLSLHDAIAAEAAAGEASEKEHSLSKYEIAGSSSLKTILPRPETPLPKTVKSIALSPWNPAPYHLRQKGHLLYLQVTTNEGEQFQITSHVSGFYVNKCSNAKFDPFPKTIPKKRSAHSLLTLISQLSPSFNSSFEALQEANNQKDLLTTFPFQNAIPNNPWLVPAPSSNVNAHQPDITRSQENYLISGVDNAETLRDWNEEFQTTRELPRETVQDRVFRERLTSKLFADYNEAAARGAVLVARGEVAPLNPTEERDAQIFVYNNIFYSFGADGVGTFASEGGDEAARVAVGKDVLGIKAVNQLDINGLFTPGTIVVDYLGKRIVGQSIVPGIFKQREPGENQIDYGGVEGKDVVATHPDFVPVFEKLSKALRIKKHPVWDKEGKRHDLEGSVETKGLLGTDGRKYVLDLYRVTPLDVMWQEEEGSDVYPHRMSILRLELVESYWRHKMSQYVKAEVERRRVAKEAAKKEQSETAEPKEEGAEEKSEEALDQERVDISGFSLALNPDVCSGQVPQTAEEKEQWAQDEKEVRDTCDFLRSKVMPELVQDLHDGDVGFPMDGQSLSQLLHKRGINIRYLGKLAQMSKEKGARLDALTTLLVQEMIARAFKHIANNYLRNVPAPFVASCLAHLLNCLLGADVNANPRAEIDSSLREVYPEGDFSFEKATPASLRADIEKQVTIRYRFSLDAEWYNSLRHLQLLRDIAIKLGIQLGARDFVFAKADLPKTPVSNGVNGAGHDDSNSNKKKKKKGGDSNSPARAAVEDKPALSIVVDDIVNVVPLVKDASPRSSLAEEALEAGRISLMQNQKQLGQELILESLSLHEQIYGILHPEVAKLYHQLSMLYYQTDEKEAAVELARKAVIVTERTLGVDSADTILSYLNLSLFEHASGNTKTALVYIKHAMDLWKIIYGPNHPDSITTMNNAAVMLQHLKQYSDSRKWFEASLVVCESLFGRQSINTATILFQLAQALALDQDSKGAVGKMRDAYNIFLQQLGPNDRNTKEAETWLEQLTQNAVSIAKHAKDIQARRLRRINMTPRTLGTRVQPQVGQTAPESAGAKDASNTSLDSRSIDELLKFIEGGDTTSASRSKQKKRAAASNPKLRGSKKSSA.

The segment at 1-53 is disordered; sequence MAQTNGELEHSKGMSSPAVRISQAQKSTKLTVDPESPEQVANGTHAEGEQPEE. TPR repeat units lie at residues 293–326, 510–543, and 628–661; these read SPSF…PNNP, DYGG…KKHP, and AKEA…ERVD. The Clu domain maps to 342–586; it reads DITRSQENYL…RVTPLDVMWQ (245 aa). Disordered regions lie at residues 631–655 and 893–925; these read AAKK…EEAL and VSNG…ARAA. TPR repeat units lie at residues 998–1031, 1040–1073, 1082–1115, and 1124–1157; these read AKLY…TERT, ILSY…WKII, ITTM…CESL, and ATIL…FLQQ. Positions 1197–1274 are disordered; that stretch reads INMTPRTLGT…KLRGSKKSSA (78 aa). The span at 1200-1217 shows a compositional bias: polar residues; the sequence is TPRTLGTRVQPQVGQTAP.

This sequence belongs to the CLU family. As to quaternary structure, may associate with the eukaryotic translation initiation factor 3 (eIF-3) complex.

The protein localises to the cytoplasm. Functionally, mRNA-binding protein involved in proper cytoplasmic distribution of mitochondria. This is Clustered mitochondria protein homolog from Aspergillus terreus (strain NIH 2624 / FGSC A1156).